The primary structure comprises 282 residues: 4-hydroxybenzoate octaprenyltransferase (282 aa).

The next 9 helical transmembrane spans lie at 17–37 (IGIL…NQGF), 40–60 (IDLL…GCVI), 90–110 (AFIL…KLPI), 113–133 (FYFA…KRFF), 135–155 (APQL…FIAS), 163–183 (FIVL…MYAM), 207–227 (LIIA…AINK), 231–251 (CFFY…LKLI), and 262–282 (AFLV…LALI).

It belongs to the UbiA prenyltransferase family. Mg(2+) serves as cofactor.

The protein localises to the cell inner membrane. It carries out the reaction all-trans-octaprenyl diphosphate + 4-hydroxybenzoate = 4-hydroxy-3-(all-trans-octaprenyl)benzoate + diphosphate. It functions in the pathway cofactor biosynthesis; ubiquinone biosynthesis. Functionally, catalyzes the prenylation of para-hydroxybenzoate (PHB) with an all-trans polyprenyl group. Mediates the second step in the final reaction sequence of ubiquinone-8 (UQ-8) biosynthesis, which is the condensation of the polyisoprenoid side chain with PHB, generating the first membrane-bound Q intermediate 3-octaprenyl-4-hydroxybenzoate. This is 4-hydroxybenzoate octaprenyltransferase from Legionella pneumophila (strain Lens).